A 438-amino-acid polypeptide reads, in one-letter code: Trigger factor (438 aa).

A PPIase FKBP-type domain is found at 163–248; the sequence is GDKLNIDFEG…VKRIETTEAR (86 aa).

This sequence belongs to the FKBP-type PPIase family. Tig subfamily.

It is found in the cytoplasm. The catalysed reaction is [protein]-peptidylproline (omega=180) = [protein]-peptidylproline (omega=0). Its function is as follows. Involved in protein export. Acts as a chaperone by maintaining the newly synthesized protein in an open conformation. Functions as a peptidyl-prolyl cis-trans isomerase. The polypeptide is Trigger factor (Syntrophomonas wolfei subsp. wolfei (strain DSM 2245B / Goettingen)).